Reading from the N-terminus, the 319-residue chain is Acetyl-coenzyme A carboxylase carboxyl transferase subunit alpha (319 aa).

A CoA carboxyltransferase C-terminal domain is found at 35–296 (NIDEEVHRLR…KAQLLADLAD (262 aa)).

It belongs to the AccA family. As to quaternary structure, acetyl-CoA carboxylase is a heterohexamer composed of biotin carboxyl carrier protein (AccB), biotin carboxylase (AccC) and two subunits each of ACCase subunit alpha (AccA) and ACCase subunit beta (AccD).

The protein resides in the cytoplasm. It carries out the reaction N(6)-carboxybiotinyl-L-lysyl-[protein] + acetyl-CoA = N(6)-biotinyl-L-lysyl-[protein] + malonyl-CoA. It functions in the pathway lipid metabolism; malonyl-CoA biosynthesis; malonyl-CoA from acetyl-CoA: step 1/1. Functionally, component of the acetyl coenzyme A carboxylase (ACC) complex. First, biotin carboxylase catalyzes the carboxylation of biotin on its carrier protein (BCCP) and then the CO(2) group is transferred by the carboxyltransferase to acetyl-CoA to form malonyl-CoA. This Citrobacter koseri (strain ATCC BAA-895 / CDC 4225-83 / SGSC4696) protein is Acetyl-coenzyme A carboxylase carboxyl transferase subunit alpha.